We begin with the raw amino-acid sequence, 119 residues long: Large ribosomal subunit protein bL20 (119 aa).

The protein belongs to the bacterial ribosomal protein bL20 family.

In terms of biological role, binds directly to 23S ribosomal RNA and is necessary for the in vitro assembly process of the 50S ribosomal subunit. It is not involved in the protein synthesizing functions of that subunit. The chain is Large ribosomal subunit protein bL20 from Burkholderia cenocepacia (strain HI2424).